We begin with the raw amino-acid sequence, 109 residues long: Ig kappa chain V region K16-167 (109 aa).

Residues 1–23 (ALVMTQTPSPVSAAVGGTVTISC) form a framework-1 region. Residues 24–35 (QASQSVYSNNLS) are complementarity-determining-1. A framework-2 region spans residues 36–50 (WFQQKPGQPPKLLIY). Positions 51 to 57 (KASTLAS) are complementarity-determining-2. Residues 58 to 89 (GVPSRFKGSGSGTQFTLPISGVECDDAATYYC) are framework-3. Residues 90-99 (QGTNTGNNIV) are complementarity-determining-3. The framework-4 stretch occupies residues 100–109 (FGTGTEVVVK).

The protein is Ig kappa chain V region K16-167 of Oryctolagus cuniculus (Rabbit).